The sequence spans 85 residues: UPF0181 protein YE1782 (85 aa).

2 disordered regions span residues 1–22 and 57–85; these read MLAG…RIHQ and DTDF…PYEG. Residues 9-21 show a composition bias toward basic and acidic residues; it reads SHEEQQEAVERIH. Over residues 74–85 the composition is skewed to acidic residues; it reads QDADEIEDPYEG.

The protein belongs to the UPF0181 family.

In Yersinia enterocolitica serotype O:8 / biotype 1B (strain NCTC 13174 / 8081), this protein is UPF0181 protein YE1782.